The primary structure comprises 265 residues: MSSQDTLTIAGKSYQSRLLVGTGKYKDFAETRAALDASGAQIVTVAIRRTNLGQNPGEPNLLDYVPPSRFTMLPNTAGCYTADDAVRTLRLARELLDGHDLVKLEVLGDPTNLFPNMPETLKAAKTLVDEGFKVMVYCTDDPIQCRMLEDIGVVAIMPLASLIGSGMGILNPWNLRLILDQSKLPVIVDAGLGTPSDAAVAMEMGCAAVLMNTAISGAKDPILMASAMKKGVEAGREAFLAGRVPRKLYSGVPSSPTEGLISTAK.

K103 acts as the Schiff-base intermediate with DXP in catalysis. 1-deoxy-D-xylulose 5-phosphate contacts are provided by residues G164, 190 to 191 (AG), and 212 to 213 (NT).

The protein belongs to the ThiG family. Homotetramer. Forms heterodimers with either ThiH or ThiS.

Its subcellular location is the cytoplasm. It catalyses the reaction [ThiS sulfur-carrier protein]-C-terminal-Gly-aminoethanethioate + 2-iminoacetate + 1-deoxy-D-xylulose 5-phosphate = [ThiS sulfur-carrier protein]-C-terminal Gly-Gly + 2-[(2R,5Z)-2-carboxy-4-methylthiazol-5(2H)-ylidene]ethyl phosphate + 2 H2O + H(+). Its pathway is cofactor biosynthesis; thiamine diphosphate biosynthesis. Functionally, catalyzes the rearrangement of 1-deoxy-D-xylulose 5-phosphate (DXP) to produce the thiazole phosphate moiety of thiamine. Sulfur is provided by the thiocarboxylate moiety of the carrier protein ThiS. In vitro, sulfur can be provided by H(2)S. This chain is Thiazole synthase, found in Bordetella avium (strain 197N).